A 305-amino-acid chain; its full sequence is MQQTASVNMQDFGYVEQFLDAMWMERGLAENTLASYRNDLMKLLQWMEANHYRLDFISLSGLQQYQSYLVDQDYKQTSRARMLSAIRRLFQYLHREKVRADDPSALLVSPKLPQRLPKDISEEQVDALLDAPDPNDPVELRDKAMLELLYATGLRVTELVSLTMENISLRQGVVRVTGKGGKERLVPMGENAIDWIETFIKQGRPALLGETSSDVVFPSKRARQMTRQTFWHRIKFYAVIAGIDTDHLSPHVLRHAFATHLLNYGADLRVVQMLLGHSDLSTTQIYTHVATERLKQIHSQHHPRA.

The 86-residue stretch at methionine 9–histidine 94 folds into the Core-binding (CB) domain. Positions arginine 115–serine 299 constitute a Tyr recombinase domain. Catalysis depends on residues arginine 155, lysine 179, histidine 251, arginine 254, and histidine 277. Tyrosine 286 acts as the O-(3'-phospho-DNA)-tyrosine intermediate in catalysis.

Belongs to the 'phage' integrase family. XerD subfamily. As to quaternary structure, forms a cyclic heterotetrameric complex composed of two molecules of XerC and two molecules of XerD.

Its subcellular location is the cytoplasm. Functionally, site-specific tyrosine recombinase, which acts by catalyzing the cutting and rejoining of the recombining DNA molecules. The XerC-XerD complex is essential to convert dimers of the bacterial chromosome into monomers to permit their segregation at cell division. It also contributes to the segregational stability of plasmids. In Vibrio vulnificus (strain CMCP6), this protein is Tyrosine recombinase XerD.